Reading from the N-terminus, the 127-residue chain is Large ribosomal subunit protein bL12 (127 aa).

The segment at 98–127 (PKPVKNGVSKEEAEEAKKQLVESGAEVEIK) is disordered. The segment covering 105 to 117 (VSKEEAEEAKKQL) has biased composition (basic and acidic residues).

Belongs to the bacterial ribosomal protein bL12 family. In terms of assembly, homodimer. Part of the ribosomal stalk of the 50S ribosomal subunit. Forms a multimeric L10(L12)X complex, where L10 forms an elongated spine to which 2 to 4 L12 dimers bind in a sequential fashion. Binds GTP-bound translation factors.

In terms of biological role, forms part of the ribosomal stalk which helps the ribosome interact with GTP-bound translation factors. Is thus essential for accurate translation. This Geobacter sulfurreducens (strain ATCC 51573 / DSM 12127 / PCA) protein is Large ribosomal subunit protein bL12.